The primary structure comprises 55 residues: ATP synthase F(0) complex subunit 8 (55 aa).

The helical transmembrane segment at 10–32 (FFTMLTTWLTFLLLIQPKLLSFI) threads the bilayer.

Belongs to the ATPase protein 8 family. In terms of assembly, component of the ATP synthase complex composed at least of ATP5F1A/subunit alpha, ATP5F1B/subunit beta, ATP5MC1/subunit c (homooctomer), MT-ATP6/subunit a, MT-ATP8/subunit 8, ATP5ME/subunit e, ATP5MF/subunit f, ATP5MG/subunit g, ATP5MK/subunit k, ATP5MJ/subunit j, ATP5F1C/subunit gamma, ATP5F1D/subunit delta, ATP5F1E/subunit epsilon, ATP5PF/subunit F6, ATP5PB/subunit b, ATP5PD/subunit d, ATP5PO/subunit OSCP. ATP synthase complex consists of a soluble F(1) head domain (subunits alpha(3) and beta(3)) - the catalytic core - and a membrane F(0) domain - the membrane proton channel (subunits c, a, 8, e, f, g, k and j). These two domains are linked by a central stalk (subunits gamma, delta, and epsilon) rotating inside the F1 region and a stationary peripheral stalk (subunits F6, b, d, and OSCP).

The protein resides in the mitochondrion membrane. Functionally, subunit 8, of the mitochondrial membrane ATP synthase complex (F(1)F(0) ATP synthase or Complex V) that produces ATP from ADP in the presence of a proton gradient across the membrane which is generated by electron transport complexes of the respiratory chain. ATP synthase complex consist of a soluble F(1) head domain - the catalytic core - and a membrane F(1) domain - the membrane proton channel. These two domains are linked by a central stalk rotating inside the F(1) region and a stationary peripheral stalk. During catalysis, ATP synthesis in the catalytic domain of F(1) is coupled via a rotary mechanism of the central stalk subunits to proton translocation. In vivo, can only synthesize ATP although its ATP hydrolase activity can be activated artificially in vitro. Part of the complex F(0) domain. In Guira guira (Guira cuckoo), this protein is ATP synthase F(0) complex subunit 8.